Reading from the N-terminus, the 477-residue chain is Glycogen synthase (477 aa).

Lysine 15 provides a ligand contact to ADP-alpha-D-glucose.

This sequence belongs to the glycosyltransferase 1 family. Bacterial/plant glycogen synthase subfamily.

The enzyme catalyses [(1-&gt;4)-alpha-D-glucosyl](n) + ADP-alpha-D-glucose = [(1-&gt;4)-alpha-D-glucosyl](n+1) + ADP + H(+). It functions in the pathway glycan biosynthesis; glycogen biosynthesis. Functionally, synthesizes alpha-1,4-glucan chains using ADP-glucose. This Streptococcus pneumoniae (strain JJA) protein is Glycogen synthase.